A 576-amino-acid chain; its full sequence is Lysine--tRNA ligase (576 aa).

Positions 413 and 420 each coordinate Mg(2+).

The protein belongs to the class-II aminoacyl-tRNA synthetase family. In terms of assembly, homodimer. Mg(2+) serves as cofactor.

The protein localises to the cytoplasm. It catalyses the reaction tRNA(Lys) + L-lysine + ATP = L-lysyl-tRNA(Lys) + AMP + diphosphate. This chain is Lysine--tRNA ligase, found in Bacteroides thetaiotaomicron (strain ATCC 29148 / DSM 2079 / JCM 5827 / CCUG 10774 / NCTC 10582 / VPI-5482 / E50).